A 395-amino-acid polypeptide reads, in one-letter code: MSLEREEPQHFGAGPAQMPTPVLQQAAKDLINFNDIGLGIGEISHRSKDATKVIEDSKKHLIELLNIPDTHEVFYLQGGGTTGFSSVATNLAAAYVGKHGKIAPAGYLVTGSWSQKSFEEAKRLHVPAEVIFNAKDYNNGKFGKIPDESLWEDKIKGKAFSYVYLCENETVHGVEWPELPKCLVNDPNIEIVADLSSDILSRKIDVSQYGVIMAGAQKNIGLAGLTLYIIKKSILKNISGASDETLHELGVPITPIAFDYPTVVKNNSAYNTIPIFTLHVMDLVFQHILKKGGVEAQQAENEEKAKILYEALDANSDFYNVPVDPKCRSKMNVVFTLKKDGLDDQFLKEAAARHLTGLKGHRSVGGFRASIYNALSVKAVQNLVDFIKEFAEKNA.

At Thr20 the chain carries Phosphothreonine. 80-81 contacts pyridoxal 5'-phosphate; it reads GT. Ser112 carries the phosphoserine modification. Trp113, Thr170, Asp194, and Gln217 together coordinate pyridoxal 5'-phosphate. Lys218 carries the N6-(pyridoxal phosphate)lysine modification. 271-272 contributes to the pyridoxal 5'-phosphate binding site; sequence NT.

It belongs to the class-V pyridoxal-phosphate-dependent aminotransferase family. SerC subfamily. Homodimer. The cofactor is pyridoxal 5'-phosphate.

It catalyses the reaction O-phospho-L-serine + 2-oxoglutarate = 3-phosphooxypyruvate + L-glutamate. The enzyme catalyses 4-(phosphooxy)-L-threonine + 2-oxoglutarate = (R)-3-hydroxy-2-oxo-4-phosphooxybutanoate + L-glutamate. It functions in the pathway amino-acid biosynthesis; L-serine biosynthesis; L-serine from 3-phospho-D-glycerate: step 2/3. Its function is as follows. Phosphoserine aminotransferase (PSAT) is a pyridoxal 5'-phosphate-dependent enzyme involved in the second step of the phosphorylated pathway of serine biosynthesis. Catalyzes the reversible conversion of 3-phosphohydroxypyruvate to phosphoserine and of 3-hydroxy-2-oxo-4-phosphonooxybutanoate to phosphohydroxythreonine. Plays an indirect role in purine biosynthesis. In Saccharomyces cerevisiae (strain ATCC 204508 / S288c) (Baker's yeast), this protein is Phosphoserine aminotransferase.